Reading from the N-terminus, the 398-residue chain is MNEQSPALRNFTINFGPQHPAAHGVLRLVLELDGEVVERVDPHIGLLHRGTEKLIETKTYLQAMPYFDRLDYVAPMNQEHAFCLAAERLLGIEVPRRGQLIRVLYSEIGRLLSHLLNVTTQAMDVGALTPPLWGFEEREKLMVFYERASGSRMHANYFRIGGVHQDLPPKLIDDIDAFCDPFLKVVDDLDQLLTGNRIFKQRNVDIGVVTLKQAWEWGFSGVMVRGSGAAWDLRKSQPYDVYAEMEFDVPIGKNGDCYDRYLIRMEEMRQSVRIMKQCIQKLRAPDGQGPVVVTDNKIAPPRRGEMKRSMEALIHHFKLYTEGVHVPAGEIYAAVEAPKGEFGVYLVSDGSNKPYKCKIRAPGFAHLQAMDFLCRGHLLADVSAILGSLDIVFGEVDR.

This sequence belongs to the complex I 49 kDa subunit family. As to quaternary structure, NDH-1 is composed of 14 different subunits. Subunits NuoB, C, D, E, F, and G constitute the peripheral sector of the complex.

The protein resides in the cell inner membrane. It catalyses the reaction a quinone + NADH + 5 H(+)(in) = a quinol + NAD(+) + 4 H(+)(out). In terms of biological role, NDH-1 shuttles electrons from NADH, via FMN and iron-sulfur (Fe-S) centers, to quinones in the respiratory chain. The immediate electron acceptor for the enzyme in this species is believed to be ubiquinone. Couples the redox reaction to proton translocation (for every two electrons transferred, four hydrogen ions are translocated across the cytoplasmic membrane), and thus conserves the redox energy in a proton gradient. The protein is NADH-quinone oxidoreductase subunit D of Bradyrhizobium sp. (strain BTAi1 / ATCC BAA-1182).